The chain runs to 204 residues: E2 ubiquitin-conjugating enzyme PEX4 (204 aa).

Positions 2-196 (SAEKRLLQEY…IEYYVGRYSI (195 aa)) constitute a UBC core domain. Cysteine 133 (glycyl thioester intermediate) is an active-site residue.

Belongs to the ubiquitin-conjugating enzyme family.

The protein resides in the peroxisome membrane. The catalysed reaction is S-ubiquitinyl-[E1 ubiquitin-activating enzyme]-L-cysteine + [E2 ubiquitin-conjugating enzyme]-L-cysteine = [E1 ubiquitin-activating enzyme]-L-cysteine + S-ubiquitinyl-[E2 ubiquitin-conjugating enzyme]-L-cysteine.. Its pathway is protein modification; protein ubiquitination. Its function is as follows. E2 ubiquitin-conjugating enzyme involved in peroxisome biosynthesis. Acts late in peroxisomal matrix protein import, after matrix protein translocation. Required for both monoubiquitination and polyubiquitination of coreceptor PEX20. polyubiquitination of PEX20 at conserved lysine 'Lys-19' near the N-terminus leads to its and proteasomal degradation, whereas a monoubiquitination at the conserved cysteine 'Cys-8' is essential for its recycling. The sequence is that of E2 ubiquitin-conjugating enzyme PEX4 from Komagataella phaffii (strain GS115 / ATCC 20864) (Yeast).